The sequence spans 510 residues: Bifunctional purine biosynthesis protein PurH (510 aa).

The MGS-like domain maps to 1 to 142; sequence MRALLSVSDK…KNYKDVMVLC (142 aa).

The protein belongs to the PurH family.

It carries out the reaction (6R)-10-formyltetrahydrofolate + 5-amino-1-(5-phospho-beta-D-ribosyl)imidazole-4-carboxamide = 5-formamido-1-(5-phospho-D-ribosyl)imidazole-4-carboxamide + (6S)-5,6,7,8-tetrahydrofolate. The catalysed reaction is IMP + H2O = 5-formamido-1-(5-phospho-D-ribosyl)imidazole-4-carboxamide. Its pathway is purine metabolism; IMP biosynthesis via de novo pathway; 5-formamido-1-(5-phospho-D-ribosyl)imidazole-4-carboxamide from 5-amino-1-(5-phospho-D-ribosyl)imidazole-4-carboxamide (10-formyl THF route): step 1/1. The protein operates within purine metabolism; IMP biosynthesis via de novo pathway; IMP from 5-formamido-1-(5-phospho-D-ribosyl)imidazole-4-carboxamide: step 1/1. The protein is Bifunctional purine biosynthesis protein PurH of Campylobacter jejuni (strain RM1221).